The primary structure comprises 256 residues: Hypodermin-A (256 aa).

The first 22 residues, 1–22 (MLKFVILLCSIAYVFGAVVPLG), serve as a signal peptide directing secretion. Positions 23–30 (MLSQSDGR) are cleaved as a propeptide — activation peptide. The region spanning 31–254 (IVGGVESKIE…VRSLIVSNAE (224 aa)) is the Peptidase S1 domain. C56 and C72 are joined by a disulfide. Residues H71 and D116 each act as charge relay system in the active site. Disulfide bonds link C180-C197 and C206-C230. The Charge relay system role is filled by S210.

The protein belongs to the peptidase S1 family.

The protein localises to the secreted. In terms of biological role, specificity, limited to carboxyl side of arginine residue in B-chain of insulin. This chain is Hypodermin-A, found in Hypoderma lineatum (Early cattle grub).